Here is a 673-residue protein sequence, read N- to C-terminus: Inactive polyglycylase TTLL10 (673 aa).

The interval 1-132 (MDHSCTRFIH…ADSDDTNAAG (132 aa)) is disordered. Residues 8–36 (FIHRRGPPTRTRAGFKRGKRPRIQQRPRA) show a composition bias toward basic residues. Positions 52-62 (ASQPGPCPAPG) are enriched in pro residues. Basic and acidic residues predominate over residues 89–105 (PDHDADGHCGPDLEGAE). Residues 155-552 (PGPFFYIGGS…TFRKSLRGQK (398 aa)) form the TTL domain. Residues 362–365 (QRYI), K375, and D377 each bind ATP. The disordered stretch occupies residues 569-673 (EADPRPHLGG…EREEPENARP (105 aa)). The span at 612 to 627 (PAPPPLVPQRPRPPGP) shows a compositional bias: pro residues. Residues 661–673 (AKEEREEPENARP) are compositionally biased toward basic and acidic residues.

Functionally, inactive polyglycylase. The sequence is that of Inactive polyglycylase TTLL10 from Homo sapiens (Human).